A 268-amino-acid polypeptide reads, in one-letter code: Nickel import ATP-binding protein NikE (268 aa).

In terms of domain architecture, ABC transporter spans 4-252 (LNVSDLSHHY…SSDAGRVLQN (249 aa)). 45-52 (GRSGCGKS) contributes to the ATP binding site.

Belongs to the ABC transporter superfamily. Nickel importer (TC 3.A.1.5.3) family. As to quaternary structure, the complex is composed of two ATP-binding proteins (NikD and NikE), two transmembrane proteins (NikB and NikC) and a solute-binding protein (NikA).

It is found in the cell inner membrane. The enzyme catalyses Ni(2+)(out) + ATP + H2O = Ni(2+)(in) + ADP + phosphate + H(+). Part of the ABC transporter complex NikABCDE involved in nickel import. Responsible for energy coupling to the transport system. In Escherichia coli O6:K15:H31 (strain 536 / UPEC), this protein is Nickel import ATP-binding protein NikE.